Here is a 181-residue protein sequence, read N- to C-terminus: UPF0301 protein MXAN_2022 (181 aa).

Belongs to the UPF0301 (AlgH) family.

The protein is UPF0301 protein MXAN_2022 of Myxococcus xanthus (strain DK1622).